The sequence spans 308 residues: Ornithine carbamoyltransferase (308 aa).

Carbamoyl phosphate is bound by residues 55-58 (STRT), Gln82, Arg106, and 133-136 (HPCQ). L-ornithine contacts are provided by residues Asn164, Asp227, and 231–232 (SM). Carbamoyl phosphate-binding positions include 267 to 268 (CL) and Arg295.

It belongs to the aspartate/ornithine carbamoyltransferase superfamily. OTCase family.

It is found in the cytoplasm. The catalysed reaction is carbamoyl phosphate + L-ornithine = L-citrulline + phosphate + H(+). The protein operates within amino-acid biosynthesis; L-arginine biosynthesis; L-arginine from L-ornithine and carbamoyl phosphate: step 1/3. Its function is as follows. Reversibly catalyzes the transfer of the carbamoyl group from carbamoyl phosphate (CP) to the N(epsilon) atom of ornithine (ORN) to produce L-citrulline. The polypeptide is Ornithine carbamoyltransferase (Prochlorococcus marinus subsp. pastoris (strain CCMP1986 / NIES-2087 / MED4)).